A 109-amino-acid polypeptide reads, in one-letter code: Hainantoxin-XVIII-4 (109 aa).

The signal sequence occupies residues 1-18; the sequence is MKLSIIIIATSLVIAVVA. A propeptide spanning residues 19 to 46 is cleaved from the precursor; sequence FPSKDSKAIENDKTEQRMEIVVQETARA. 3 cysteine pairs are disulfide-bonded: cysteine 55/cysteine 68, cysteine 59/cysteine 108, and cysteine 61/cysteine 81.

It belongs to the neurotoxin 25 family. F7 subfamily. Expressed by the venom gland.

The protein localises to the secreted. Putative ion channel inhibitor. The chain is Hainantoxin-XVIII-4 from Cyriopagopus hainanus (Chinese bird spider).